We begin with the raw amino-acid sequence, 114 residues long: Large ribosomal subunit protein P2v (114 aa).

A disordered region spans residues 74–114 (VASGGGGGAAPAAEPASVESKKKEEEKEESEDDGGMMSLFD). Serine 103 carries the post-translational modification Phosphoserine.

The protein belongs to the eukaryotic ribosomal protein P1/P2 family. P1 and P2 exist as dimers at the large ribosomal subunit. Post-translationally, phosphorylated.

Its function is as follows. Plays an important role in the elongation step of protein synthesis. This chain is Large ribosomal subunit protein P2v (RPP2E), found in Arabidopsis thaliana (Mouse-ear cress).